A 334-amino-acid polypeptide reads, in one-letter code: GTP 3',8-cyclase (334 aa).

One can recognise a Radical SAM core domain in the interval 13 to 239 (RFHRKFYYLR…KVKAVNDGPA (227 aa)). A GTP-binding site is contributed by Arg-22. [4Fe-4S] cluster is bound by residues Cys-29 and Cys-33. Tyr-35 is a binding site for S-adenosyl-L-methionine. Residue Cys-36 participates in [4Fe-4S] cluster binding. Residue Arg-73 participates in GTP binding. Gly-77 serves as a coordination point for S-adenosyl-L-methionine. Thr-104 is a GTP binding site. Ser-128 is an S-adenosyl-L-methionine binding site. Lys-165 contacts GTP. Met-199 provides a ligand contact to S-adenosyl-L-methionine. Positions 262 and 265 each coordinate [4Fe-4S] cluster. 267–269 (RLR) is a binding site for GTP. [4Fe-4S] cluster is bound at residue Cys-279.

The protein belongs to the radical SAM superfamily. MoaA family. Monomer and homodimer. [4Fe-4S] cluster serves as cofactor.

The catalysed reaction is GTP + AH2 + S-adenosyl-L-methionine = (8S)-3',8-cyclo-7,8-dihydroguanosine 5'-triphosphate + 5'-deoxyadenosine + L-methionine + A + H(+). It functions in the pathway cofactor biosynthesis; molybdopterin biosynthesis. In terms of biological role, catalyzes the cyclization of GTP to (8S)-3',8-cyclo-7,8-dihydroguanosine 5'-triphosphate. The protein is GTP 3',8-cyclase of Vibrio atlanticus (strain LGP32) (Vibrio splendidus (strain Mel32)).